A 565-amino-acid chain; its full sequence is uncharacterized protein (565 aa).

Transmembrane regions (helical) follow at residues 14 to 34 (LAIF…IGKF), 36 to 56 (LGVV…DITV), 92 to 112 (MGFA…LAKI), 117 to 137 (VGEA…IGVA), and 157 to 177 (IIPV…AWVL). Positions 296-381 (PEVLDPQLLD…VDAAAKQLGY (86 aa)) constitute an RCK C-terminal domain. 6 consecutive transmembrane segments (helical) span residues 391 to 411 (MIFV…SIHM), 414 to 434 (VPIS…FGWL), 448 to 468 (ALWI…GIAA), 481 to 501 (LSLF…GILM), 508 to 530 (FHPA…LGAI), and 545 to 565 (VTYA…VLLM).

The protein belongs to the AAE transporter (TC 2.A.81) family.

It localises to the cell membrane. This is an uncharacterized protein from Bacteroides fragilis (strain YCH46).